A 220-amino-acid chain; its full sequence is MPFRDLILFNLSKFLLTEDEESLEIVSSLCRGFEISYDDLISYFPDRKYHKYISKVFEHVDLSEELSMEFHDTTLRDLVYLRLYKYSKYIRPCYKLGDNLKGIVVIKDRNIYIREANDDLIEYLLKEYTPQIYTYSNERVPIAGSKLILCGFSQVTFMAYTTSHITTNKKVDVLVSKKCIDELVDPINYQILQNLFDKGSGTINKILRKIFYSVTGGQTP.

It belongs to the orthopoxvirus OPG087 family. Interacts with H5 and A18. Might be part of a transcription complex composed at least of OPG087, OPG145, and OPG110.

Its function is as follows. Involved in postreplicative transcription elongation on intermediate and late genes. In Cynomys gunnisoni (Gunnison's prairie dog), this protein is Late transcription elongation factor OPG087 (OPG087).